An 83-amino-acid polypeptide reads, in one-letter code: Toxin TdNa5 (83 aa).

The first 20 residues, 1–20 (MKTIIFFIACLMLIDVVVES), serve as a signal peptide directing secretion. The LCN-type CS-alpha/beta domain occupies 21-82 (KDGYIIEHRG…IFDSNNNKCG (62 aa)). 4 cysteine pairs are disulfide-bonded: cysteine 31-cysteine 81, cysteine 35-cysteine 57, cysteine 43-cysteine 62, and cysteine 47-cysteine 64. A Cysteine amide modification is found at cysteine 81.

It belongs to the long (4 C-C) scorpion toxin superfamily. Sodium channel inhibitor family. Beta subfamily. As to expression, expressed by the venom gland.

The protein resides in the secreted. In terms of biological role, inhibits the sodium currents (Nav) in an apparent irreversible manner. Produces small depolarization and induces repetitive firing in squid axons. Is specific for arthropods (crickets, triatomides, crabs and squids), but is non-toxic to mice. Shows antibacterial activity against both Gram-positive and Gram-negative bacteria. This Tityus discrepans (Venezuelan scorpion) protein is Toxin TdNa5.